The following is a 283-amino-acid chain: Elongation factor Ts (283 aa).

The involved in Mg(2+) ion dislocation from EF-Tu stretch occupies residues 84-87; the sequence is TDFV.

It belongs to the EF-Ts family.

It localises to the cytoplasm. Its function is as follows. Associates with the EF-Tu.GDP complex and induces the exchange of GDP to GTP. It remains bound to the aminoacyl-tRNA.EF-Tu.GTP complex up to the GTP hydrolysis stage on the ribosome. In Bifidobacterium longum (strain DJO10A), this protein is Elongation factor Ts.